Here is a 377-residue protein sequence, read N- to C-terminus: Erythronate-4-phosphate dehydrogenase (377 aa).

Serine 45 and threonine 67 together coordinate substrate. NAD(+) is bound by residues 127–128, aspartate 147, and threonine 176; that span reads QV. Arginine 209 is a catalytic residue. Position 233 (aspartate 233) interacts with NAD(+). Residue glutamate 238 is part of the active site. Histidine 255 serves as the catalytic Proton donor. Glycine 258 lines the NAD(+) pocket. Residue tyrosine 259 coordinates substrate.

This sequence belongs to the D-isomer specific 2-hydroxyacid dehydrogenase family. PdxB subfamily. As to quaternary structure, homodimer.

The protein resides in the cytoplasm. It catalyses the reaction 4-phospho-D-erythronate + NAD(+) = (R)-3-hydroxy-2-oxo-4-phosphooxybutanoate + NADH + H(+). Its pathway is cofactor biosynthesis; pyridoxine 5'-phosphate biosynthesis; pyridoxine 5'-phosphate from D-erythrose 4-phosphate: step 2/5. Its function is as follows. Catalyzes the oxidation of erythronate-4-phosphate to 3-hydroxy-2-oxo-4-phosphonooxybutanoate. The chain is Erythronate-4-phosphate dehydrogenase from Vibrio vulnificus (strain YJ016).